The sequence spans 454 residues: Replicative DNA helicase DnaB (454 aa).

The tract at residues 1–149 is N-terminal domain (NTD); sequence MSELFSERIP…LDEADRKIME (149 aa). Residues 163-176 form a linker helix region; that stretch reads KDILVQTYDNIEML. The 267-residue stretch at 179–445 folds into the SF4 helicase domain; that stretch reads RDGEITGIPT…NKFVNLERRF (267 aa). The C-terminal domain (CTD) stretch occupies residues 183-454; sequence ITGIPTGFTE…FDEAQIPPGA (272 aa). Residues serine 213, glycine 215, lysine 216, threonine 217, and alanine 218 each contribute to the ATP site. The Nucleophile role is filled by glutamate 241. The ATP site is built by arginine 250 and glutamine 362. Positions 381, 382, and 384 each coordinate ssDNA. Positions 418, 419, and 420 each coordinate ATP.

The protein belongs to the helicase family. DnaB subfamily. As to quaternary structure, homohexamer. Interacts with DnaG primase, as DnaB(6):DnaG(3). Interacts with the N-terminus of DnaI (shown with DnaI of B.subtilis), forms a helicase DnaB(6):DnaI(6) complex. The DnaB-DnaI complex is disrupted by DnaD (DnaD and DnaI from B.subtilis). A stable complex DnaI(6):DnaB(6):DnaG(3) fragment can be isolated; DnaI and DnaG do not contact each other (DnaI in this complex is derived from B.subtilis). Forms a complex with DNA clamp loader protein tau (shown with B.subtilis HolA) tau(3):DnaB(6); a single ATP hydrolysis even is sufficient for complex formation.

The enzyme catalyses Couples ATP hydrolysis with the unwinding of duplex DNA at the replication fork by translocating in the 5'-3' direction. This creates two antiparallel DNA single strands (ssDNA). The leading ssDNA polymer is the template for DNA polymerase III holoenzyme which synthesizes a continuous strand.. It catalyses the reaction ATP + H2O = ADP + phosphate + H(+). In terms of biological role, the main replicative DNA helicase, it participates in initiation and elongation during chromosome replication. Travels ahead of the DNA replisome, separating double-stranded (ds)DNA into templates for DNA synthesis. Binding of single-stranded (ss)DNA to the hexamer suggests a 2-nucleotide step size for the helicase and a hand-over-hand mechanism of DNA unwinding. Has ssDNA-stimulated ATPase activity. DnaG primase stimulates the helicase activity (the helicase direction was not determine but is probably 5'-3'). Loaded onto DNA by helicase loader DnaI (shown with DnaI of B.subtilis); ATP-binding enhances loading and subsequent ATP hydrolysis dissociates the complex, leaving helicase on the DNA. Binds ssDNA and less well dsDNA, in the presence of ADPNP (probably 5'-adenylyl beta, gamma-imidodiphosphate, but not ATP) binding to both DNAs is improved. The polypeptide is Replicative DNA helicase DnaB (Geobacillus stearothermophilus (Bacillus stearothermophilus)).